The sequence spans 31 residues: Cytochrome b6-f complex subunit 6 (31 aa).

A helical transmembrane segment spans residues 4–24 (LTSYFGFLLAALTITPALFIG).

Belongs to the PetL family. The 4 large subunits of the cytochrome b6-f complex are cytochrome b6, subunit IV (17 kDa polypeptide, PetD), cytochrome f and the Rieske protein, while the 4 small subunits are PetG, PetL, PetM and PetN. The complex functions as a dimer.

The protein resides in the plastid. It is found in the chloroplast thylakoid membrane. In terms of biological role, component of the cytochrome b6-f complex, which mediates electron transfer between photosystem II (PSII) and photosystem I (PSI), cyclic electron flow around PSI, and state transitions. PetL is important for photoautotrophic growth as well as for electron transfer efficiency and stability of the cytochrome b6-f complex. This chain is Cytochrome b6-f complex subunit 6, found in Agrostis stolonifera (Creeping bentgrass).